A 749-amino-acid chain; its full sequence is MASIDPYQHIIVEHQYSHRFTVTVIKATNVTKGTFGDMLDTPDPYVELYISSAPDSRKRTKHFNNNINPVWNETFEFILDPNQDNVLEITLMDANYVMDESLGTTTFPISSVKPGEKKQVPFTFNKVTEMILEFLLEVCSSTDLRFSMALCDQEKFFRQKRKNQVINGLRKLLGPEKTKDLNPTSRDVPVIAVLGSGGGFRAMIGFSGVMKALFESGVLDCVTYIAGLSGSTWYMSALYSHADFPNKGPKEINKELMNNVSHNPLLLLTPQKVKRYIEALWKKKSSGQPVTFTDIFAMLIGETLIKDRMNRKLSHMQEKISHGQCPLPLFTCLHVKPDVSELMFADWVEFSPYEIGMAKYGTFMPPDHFGSKFFMGTVIKKYEENPLHFLMGVWGSAFSILINRVLGVSTNNQGSTMEEEIENLKPKHILGNDSSDSDDEMQEPKGTENSKAEEEYQRNNQASWVQRMLMALLGDSALFNTREGRAGKVHNFMLGLNLNTSYPYSPLSGLCTQQSMEEDEFDAAVADPDEFEQIYEPLDVKSKKIHIVDSGLTFNLPYPLILRPQRGVDLIISFDFSARPSDSSPPFKELLLAEKWARMNKLPFPKIDPHVFDREGLKECYIFKPKNPSVEKDCPTVIHFVLANLQFRNFKAPGVPRETAEEKEFADFDIFDDPETPFSTFNFQYPNEAFKRLHDLMEFNTLNNINVIKQAMVESIEYRKQHPSRCSVSLNDVEARKLLHKDSQSKFQM.

The C2 domain occupies 1 to 124 (MASIDPYQHI…GEKKQVPFTF (124 aa)). Residues 1-178 (MASIDPYQHI…LRKLLGPEKT (178 aa)) form a phospholipid binding region. Positions 40, 41, 43, 65, 93, 94, and 95 each coordinate Ca(2+). A PLA2c domain is found at 138 to 740 (VCSSTDLRFS…NDVEARKLLH (603 aa)). The active-site Nucleophile is serine 229. The tract at residues 417-458 (MEEEIENLKPKHILGNDSSDSDDEMQEPKGTENSKAEEEYQR) is disordered. The segment covering 442–457 (QEPKGTENSKAEEEYQ) has biased composition (basic and acidic residues). Aspartate 549 (proton acceptor) is an active-site residue.

The protein localises to the cytoplasm. Its subcellular location is the cytoplasmic vesicle. The catalysed reaction is a 1,2-diacyl-sn-glycero-3-phosphocholine + H2O = a 1-acyl-sn-glycero-3-phosphocholine + a fatty acid + H(+). It catalyses the reaction a 1-acyl-sn-glycero-3-phosphocholine + H2O = sn-glycerol 3-phosphocholine + a fatty acid + H(+). Its activity is regulated as follows. Stimulated by agonists such as ATP, EGF, thrombin and bradykinin as well as by cytosolic Ca(2+). Functionally, selectively hydrolyzes arachidonyl phospholipids in the sn-2 position releasing arachidonic acid. Together with its lysophospholipid activity, it is implicated in the initiation of the inflammatory response. This chain is Cytosolic phospholipase A2 (pla2g4a), found in Xenopus tropicalis (Western clawed frog).